Consider the following 198-residue polypeptide: Recombination protein RecR (198 aa).

Residues 56-71 (CDICGNVSEEPTCRIC) form a C4-type zinc finger. Residues 79 to 175 (AVVCVVEEPK…NVTRLASGLP (97 aa)) form the Toprim domain.

The protein belongs to the RecR family.

May play a role in DNA repair. It seems to be involved in an RecBC-independent recombinational process of DNA repair. It may act with RecF and RecO. The polypeptide is Recombination protein RecR (Saccharopolyspora erythraea (strain ATCC 11635 / DSM 40517 / JCM 4748 / NBRC 13426 / NCIMB 8594 / NRRL 2338)).